The primary structure comprises 489 residues: Betaine aldehyde dehydrogenase (489 aa).

K(+)-binding residues include Thr-26 and Asp-93. 150–152 (GAW) serves as a coordination point for NAD(+). Lys-162 (charge relay system) is an active-site residue. An NAD(+)-binding site is contributed by 176-179 (KPSE). K(+) is bound at residue Val-180. NAD(+) is bound at residue 229–232 (GVET). Leu-245 serves as a coordination point for K(+). Glu-251 acts as the Proton acceptor in catalysis. 3 residues coordinate NAD(+): Gly-253, Cys-285, and Glu-386. Cys-285 acts as the Nucleophile in catalysis. Cys-285 carries the post-translational modification Cysteine sulfenic acid (-SOH). 2 residues coordinate K(+): Lys-456 and Gly-459. Glu-463 serves as the catalytic Charge relay system.

It belongs to the aldehyde dehydrogenase family. Dimer of dimers. It depends on K(+) as a cofactor.

The catalysed reaction is betaine aldehyde + NAD(+) + H2O = glycine betaine + NADH + 2 H(+). The protein operates within amine and polyamine biosynthesis; betaine biosynthesis via choline pathway; betaine from betaine aldehyde: step 1/1. Its function is as follows. Involved in the biosynthesis of the osmoprotectant glycine betaine. Catalyzes the irreversible oxidation of betaine aldehyde to the corresponding acid. The chain is Betaine aldehyde dehydrogenase from Burkholderia mallei (strain SAVP1).